A 423-amino-acid polypeptide reads, in one-letter code: tRNA-dihydrouridine(16/17) synthase [NAD(P)(+)] (423 aa).

Residue Thr-2 is modified to N-acetylthreonine. Residues 35-37 (PMV) and Gln-92 contribute to the FMN site. Residue Cys-121 is the Proton donor of the active site. Residues Lys-160, His-188, 223 to 225 (NGN), and 247 to 248 (AE) each bind FMN. Residues 404 to 423 (KKRKADVPLESADKKKDVKA) form a disordered region. A compositionally biased stretch (basic and acidic residues) spans 408–423 (ADVPLESADKKKDVKA).

Belongs to the Dus family. Dus1 subfamily. In terms of assembly, monomer. The cofactor is FMN.

The catalysed reaction is 5,6-dihydrouridine(16) in tRNA + NADP(+) = uridine(16) in tRNA + NADPH + H(+). It catalyses the reaction 5,6-dihydrouridine(16) in tRNA + NAD(+) = uridine(16) in tRNA + NADH + H(+). The enzyme catalyses 5,6-dihydrouridine(17) in tRNA + NAD(+) = uridine(17) in tRNA + NADH + H(+). It carries out the reaction 5,6-dihydrouridine(17) in tRNA + NADP(+) = uridine(17) in tRNA + NADPH + H(+). The catalysed reaction is a 5,6-dihydrouridine in mRNA + NAD(+) = a uridine in mRNA + NADH + H(+). It catalyses the reaction a 5,6-dihydrouridine in mRNA + NADP(+) = a uridine in mRNA + NADPH + H(+). Catalyzes the synthesis of dihydrouridine, a modified base found in the D-loop of most tRNAs. Specifically modifies U16 and U17 in cytoplasmic tRNAs. Also able to mediate dihydrouridylation of some mRNAs, thereby affecting their translation. The protein is tRNA-dihydrouridine(16/17) synthase [NAD(P)(+)] of Saccharomyces cerevisiae (strain ATCC 204508 / S288c) (Baker's yeast).